The sequence spans 269 residues: Protein CURLY FLAG LEAF 1 (269 aa).

The disordered stretch occupies residues 17–44 (SLNGGGGGGGGRRRGRRAAAAEGSDDSE). The short motif at 47-52 (TVELNS) is the EAR element. The region spanning 54–88 (VALPYHWEQCLDIRTGQVYYINWEDGTRTTIDPRS) is the WW domain. Disordered regions lie at residues 83–133 (TIDP…SGYT) and 174–218 (GDDE…SGAG). Low complexity-rich tracts occupy residues 87–106 (RSSS…SSSR), 121–133 (AAAA…SGYT), and 180–202 (SSSS…AVSS). Residues 203-212 (TLSSFSPTDE) show a composition bias toward polar residues.

In terms of assembly, binds to HDG1.

In terms of biological role, negatively regulates the cuticle development probably by interacting with the HD-ZIP IV transcription factor HDG1. The polypeptide is Protein CURLY FLAG LEAF 1 (Oryza sativa subsp. indica (Rice)).